The sequence spans 187 residues: Ribosome maturation factor RimM (187 aa).

Residues 111–187 (KDEYYWVDLI…RILVDWQADF (77 aa)) enclose the PRC barrel domain.

This sequence belongs to the RimM family. In terms of assembly, binds ribosomal protein uS19.

It localises to the cytoplasm. In terms of biological role, an accessory protein needed during the final step in the assembly of 30S ribosomal subunit, possibly for assembly of the head region. Essential for efficient processing of 16S rRNA. May be needed both before and after RbfA during the maturation of 16S rRNA. It has affinity for free ribosomal 30S subunits but not for 70S ribosomes. The protein is Ribosome maturation factor RimM of Albidiferax ferrireducens (strain ATCC BAA-621 / DSM 15236 / T118) (Rhodoferax ferrireducens).